Reading from the N-terminus, the 459-residue chain is MSSAIKEVQGAPVKWVTNWTPEAIRGLVDQEKGLLDPRIYADQSLYELELERVFGRSWLLLGHESHVPETGDFLATYMGEDPVVMVRQKDKSIKVFLNQCRHRGMRICRSDAGNAKAFTCSYHGWAYDIAGKLVNVPFEKEAFCDKKEGDCGFDKAEWGPLQARVATYKGLVFANWDVQAPDLETYLGDARPYMDVMLDRTPAGTVAIGGMQKWVIPCNWKFAAEQFCSDMYHAGTTTHLSGILAGIPPEMDLSQAQIPTKGNQFRAAWGGHGSGWYVDEPGSLLAVMGPKVTQYWTEGPAAELAEQRLGHTGMPVRRMVGQHMTIFPTCSFLPTFNNIRIWHPRGPNEIEVWAFTLVDADAPAEIKEEYRRHNIRNFSAGGVFEQDDGENWVEIQKGLRGYKAKSQPLNAQMGLGRSQTGHPDFPGNVGYVYAEEAARGMYHHWMRMMSEPSWATLKP.

Residues 58-156 (WLLLGHESHV…KEGDCGFDKA (99 aa)) enclose the Rieske domain. [2Fe-2S] cluster-binding residues include Cys-100, His-102, Cys-120, and His-123. Residues His-233 and His-239 each coordinate Fe cation.

The protein belongs to the bacterial ring-hydroxylating dioxygenase alpha subunit family. As to quaternary structure, heterohexamer consisting of three BphA subunits and three BphE subunits. A ferredoxin (BphF) and a ferredoxin reductase (BphG) must be present to obtain activity. Requires [2Fe-2S] cluster as cofactor. It depends on Fe cation as a cofactor.

It carries out the reaction biphenyl + NADH + O2 + H(+) = (2R,3S)-3-phenylcyclohexa-3,5-diene-1,2-diol + NAD(+). It functions in the pathway xenobiotic degradation; biphenyl degradation; 2-hydroxy-2,4-pentadienoate and benzoate from biphenyl: step 1/4. The sequence is that of Biphenyl dioxygenase subunit alpha (bphA) from Paraburkholderia xenovorans (strain LB400).